A 511-amino-acid polypeptide reads, in one-letter code: Probable DNA ligase (511 aa).

Residue Glu-209 coordinates ATP. The active-site N6-AMP-lysine intermediate is Lys-211. ATP contacts are provided by Arg-216, Arg-231, Glu-260, Phe-299, Arg-371, and Lys-377.

It belongs to the ATP-dependent DNA ligase family. The cofactor is Mg(2+).

It carries out the reaction ATP + (deoxyribonucleotide)n-3'-hydroxyl + 5'-phospho-(deoxyribonucleotide)m = (deoxyribonucleotide)n+m + AMP + diphosphate.. Its function is as follows. DNA ligase that seals nicks in double-stranded DNA during DNA replication, DNA recombination and DNA repair. In Mycolicibacterium gilvum (strain PYR-GCK) (Mycobacterium gilvum (strain PYR-GCK)), this protein is Probable DNA ligase.